The chain runs to 129 residues: Small ribosomal subunit protein uS9 (129 aa).

The protein belongs to the universal ribosomal protein uS9 family.

The polypeptide is Small ribosomal subunit protein uS9 (Helicobacter pylori (strain P12)).